Consider the following 241-residue polypeptide: MRKSVIAGNWKMHMTCAEAKSYLEEFIPLIKNIKDDRKVVIAPPFTAISTFSDHSDFEYLDISSQNIHWEDQGAFTAEISPKMLLEHGVSYAIVGHSEPRKYFSESDEQINKRAVFAQSSGLTPIVCVGETLEQRERGEADRVITRQVEQGLENTDPSNLIVAYEPIWAIGTGKTCEAEDANKICSLIRKLIGFDDVIIQYGGSVKPNNIDEIMSMSDIDGVLVGGASLDPNSFARIANYQ.

Residue 9-11 participates in substrate binding; that stretch reads NWK. Catalysis depends on histidine 96, which acts as the Electrophile. The active-site Proton acceptor is the glutamate 165. Substrate-binding positions include glycine 171, serine 204, and 225–226; that span reads GG.

It belongs to the triosephosphate isomerase family. As to quaternary structure, homodimer.

It is found in the cytoplasm. The catalysed reaction is D-glyceraldehyde 3-phosphate = dihydroxyacetone phosphate. It participates in carbohydrate biosynthesis; gluconeogenesis. The protein operates within carbohydrate degradation; glycolysis; D-glyceraldehyde 3-phosphate from glycerone phosphate: step 1/1. Involved in the gluconeogenesis. Catalyzes stereospecifically the conversion of dihydroxyacetone phosphate (DHAP) to D-glyceraldehyde-3-phosphate (G3P). This Prochlorococcus marinus (strain MIT 9301) protein is Triosephosphate isomerase.